The following is a 406-amino-acid chain: Type II secretion system protein F (406 aa).

Residues 1-171 are Cytoplasmic-facing; it reads MAAFEYKALD…KMRSKLQQAM (171 aa). The Ca(2+) site is built by Glu97, Glu151, and Asp155. Residues 172–192 traverse the membrane as a helical segment; the sequence is IYPVVLVVFAVGIVAFLLAAV. Topologically, residues 193–223 are periplasmic; it reads VPKIVGQFVQMGQALPASTQFLLDASDFLQH. The helical transmembrane segment at 224 to 244 threads the bilayer; sequence WGISLLVGLLMLIYLVRWLLT. Over 245-368 the chain is Cytoplasmic; sequence KPDIRLRWDR…QDNSFESTVN (124 aa). The chain crosses the membrane as a helical span at residues 369–389; the sequence is IALGIFTPALIALMAGMVLFI. Over 390–406 the chain is Periplasmic; the sequence is VMATLMPILEMNNLMSR.

Belongs to the GSP F family. As to quaternary structure, type II secretion system is composed of four main components: the outer membrane complex, the inner membrane complex, the cytoplasmic secretion ATPase and the periplasm-spanning pseudopilus. Homodimer. Interacts with EpsE/GspE and EpsL/GspL components.

The protein resides in the cell inner membrane. Component of the type II secretion system inner membrane complex required for the energy-dependent secretion of extracellular factors such as proteases and toxins from the periplasm. This chain is Type II secretion system protein F (epsF), found in Vibrio cholerae serotype O1 (strain ATCC 39315 / El Tor Inaba N16961).